Reading from the N-terminus, the 312-residue chain is Molybdenum cofactor biosynthesis bifunctional protein (312 aa).

The molybdenum cofactor biosynthesis protein C stretch occupies residues 1–155 (MEFTHLDENG…GGKSSAAEYH (155 aa)). Substrate contacts are provided by residues 74–76 (LCH) and 110–111 (ME). Residue D125 is part of the active site. Residues 156-312 (PRTAILVMSD…FPMLKGDGHA (157 aa)) form a molybdenum cofactor biosynthesis protein B region.

It in the N-terminal section; belongs to the MoaC family. This sequence in the C-terminal section; belongs to the MoaB/Mog family.

It catalyses the reaction (8S)-3',8-cyclo-7,8-dihydroguanosine 5'-triphosphate = cyclic pyranopterin phosphate + diphosphate. Its pathway is cofactor biosynthesis; molybdopterin biosynthesis. Its function is as follows. Catalyzes the conversion of (8S)-3',8-cyclo-7,8-dihydroguanosine 5'-triphosphate to cyclic pyranopterin monophosphate (cPMP). In Chlorobaculum tepidum (strain ATCC 49652 / DSM 12025 / NBRC 103806 / TLS) (Chlorobium tepidum), this protein is Molybdenum cofactor biosynthesis bifunctional protein (moaCB).